Consider the following 213-residue polypeptide: Major fimbrial subunit (213 aa).

Positions 1 to 20 are cleaved as a signal peptide; sequence MKKTLLGSLILLAFAGNVQA. A disulfide bond links Cys41 and Cys81.

This sequence belongs to the fimbrial protein family.

It localises to the fimbrium. Functionally, mediates adherence to oropharyngeal epithelial cells. Helps the airway colonization process. The sequence is that of Major fimbrial subunit (hifA) from Haemophilus influenzae.